A 131-amino-acid chain; its full sequence is Large ribosomal subunit protein bL12 (131 aa).

This sequence belongs to the bacterial ribosomal protein bL12 family. In terms of assembly, homodimer. Part of the ribosomal stalk of the 50S ribosomal subunit. Forms a multimeric L10(L12)X complex, where L10 forms an elongated spine to which 2 to 4 L12 dimers bind in a sequential fashion. Binds GTP-bound translation factors.

Its function is as follows. Forms part of the ribosomal stalk which helps the ribosome interact with GTP-bound translation factors. Is thus essential for accurate translation. The protein is Large ribosomal subunit protein bL12 of Prochlorococcus marinus (strain MIT 9313).